Here is a 344-residue protein sequence, read N- to C-terminus: Phosphoribosylformylglycinamidine cyclo-ligase (344 aa).

It belongs to the AIR synthase family.

Its subcellular location is the cytoplasm. The enzyme catalyses 2-formamido-N(1)-(5-O-phospho-beta-D-ribosyl)acetamidine + ATP = 5-amino-1-(5-phospho-beta-D-ribosyl)imidazole + ADP + phosphate + H(+). It participates in purine metabolism; IMP biosynthesis via de novo pathway; 5-amino-1-(5-phospho-D-ribosyl)imidazole from N(2)-formyl-N(1)-(5-phospho-D-ribosyl)glycinamide: step 2/2. The chain is Phosphoribosylformylglycinamidine cyclo-ligase from Haemophilus influenzae (strain PittEE).